The following is a 122-amino-acid chain: Large ribosomal subunit protein uL18 (122 aa).

The tract at residues 1–25 (MSTLSRKQQTQKRHRRLRRHLSGTA) is disordered. The span at 9–21 (QTQKRHRRLRRHL) shows a compositional bias: basic residues.

Belongs to the universal ribosomal protein uL18 family. In terms of assembly, part of the 50S ribosomal subunit; part of the 5S rRNA/L5/L18/L25 subcomplex. Contacts the 5S and 23S rRNAs.

Its function is as follows. This is one of the proteins that bind and probably mediate the attachment of the 5S RNA into the large ribosomal subunit, where it forms part of the central protuberance. The chain is Large ribosomal subunit protein uL18 from Synechococcus sp. (strain CC9311).